A 118-amino-acid chain; its full sequence is Small ribosomal subunit protein uS13 (118 aa).

Residues 93–118 form a disordered region; it reads RNLPVRGQNTKNNARTRKGPTRPLKR. Basic residues predominate over residues 106–118; it reads ARTRKGPTRPLKR.

It belongs to the universal ribosomal protein uS13 family. As to quaternary structure, part of the 30S ribosomal subunit. Forms a loose heterodimer with protein S19. Forms two bridges to the 50S subunit in the 70S ribosome.

Functionally, located at the top of the head of the 30S subunit, it contacts several helices of the 16S rRNA. In the 70S ribosome it contacts the 23S rRNA (bridge B1a) and protein L5 of the 50S subunit (bridge B1b), connecting the 2 subunits; these bridges are implicated in subunit movement. Contacts the tRNAs in the A and P-sites. The polypeptide is Small ribosomal subunit protein uS13 (Psychrobacter cryohalolentis (strain ATCC BAA-1226 / DSM 17306 / VKM B-2378 / K5)).